Reading from the N-terminus, the 156-residue chain is Small ribosomal subunit protein uS7 (156 aa).

Belongs to the universal ribosomal protein uS7 family. In terms of assembly, part of the 30S ribosomal subunit. Contacts proteins S9 and S11.

One of the primary rRNA binding proteins, it binds directly to 16S rRNA where it nucleates assembly of the head domain of the 30S subunit. Is located at the subunit interface close to the decoding center, probably blocks exit of the E-site tRNA. This Gloeothece citriformis (strain PCC 7424) (Cyanothece sp. (strain PCC 7424)) protein is Small ribosomal subunit protein uS7.